A 360-amino-acid polypeptide reads, in one-letter code: DNA replication and repair protein RecF (360 aa).

Position 30–37 (30–37 (GQNGSGKT)) interacts with ATP.

Belongs to the RecF family.

The protein resides in the cytoplasm. The RecF protein is involved in DNA metabolism; it is required for DNA replication and normal SOS inducibility. RecF binds preferentially to single-stranded, linear DNA. It also seems to bind ATP. The chain is DNA replication and repair protein RecF from Shewanella baltica (strain OS185).